Here is a 478-residue protein sequence, read N- to C-terminus: Microfibrillar-associated protein 1 (478 aa).

Low complexity predominate over residues 1–20 (MSAATAAAAASGIQSTAGAI). 2 disordered regions span residues 1–276 (MSAA…RRAT) and 456–478 (NEHAGGMRQQFDKPTGSKRKKME). The span at 53–62 (SSEESDDDDF) shows a compositional bias: acidic residues. The span at 107-128 (DDPRLRRLRQRPVDMEDMERER) shows a compositional bias: basic and acidic residues. Acidic residues predominate over residues 140–153 (IMESDSEDEEEDEG). Residues 160–170 (RGTNKITLASE) are compositionally biased toward polar residues. Acidic residues predominate over residues 171 to 181 (SDTDAELSDTE). Positions 197–212 (QREEEVLQKEDEKQSE) are enriched in basic and acidic residues. Residues 214–231 (SESESSEYEEETESEEDN) are compositionally biased toward acidic residues. The interaction with Prp38 stretch occupies residues 229–478 (EDNEPRLKPL…PTGSKRKKME (250 aa)). Residues 245–268 (RATIQEKEREAQKQKQLEAEAKRA) show a composition bias toward basic and acidic residues.

Belongs to the MFAP1 family. In terms of assembly, component of the spliceosome B complex. Interacts (via C-terminus) with Prp38.

Its subcellular location is the nucleus. Required for pre-mRNA splicing. The sequence is that of Microfibrillar-associated protein 1 from Drosophila melanogaster (Fruit fly).